The primary structure comprises 148 residues: Putative nickel-responsive regulator (148 aa).

Residues histidine 88, histidine 99, histidine 101, and cysteine 107 each coordinate Ni(2+).

This sequence belongs to the transcriptional regulatory CopG/NikR family. Requires Ni(2+) as cofactor.

Functionally, transcriptional regulator. This chain is Putative nickel-responsive regulator, found in Helicobacter acinonychis (strain Sheeba).